The following is an 815-amino-acid chain: Leucine--tRNA ligase (815 aa).

A 'HIGH' region motif is present at residues P40–H50. The 'KMSKS' region signature appears at K583–S587. K586 provides a ligand contact to ATP.

Belongs to the class-I aminoacyl-tRNA synthetase family.

The protein localises to the cytoplasm. It catalyses the reaction tRNA(Leu) + L-leucine + ATP = L-leucyl-tRNA(Leu) + AMP + diphosphate. The sequence is that of Leucine--tRNA ligase from Nitratiruptor sp. (strain SB155-2).